The sequence spans 138 residues: MLQPSRRKFRKEQKGRNTGVATRGANVSFGEFGLKATERGRLTARQIEAARRAISRHIKRGGRIFIRIFPDKPISQKPAEVRMGNGKGNPEYYVAEIQPGKVLYELNGVPEDLAREAFTLAAAKLPLRTTFVTRMFGT.

Residues 1–13 (MLQPSRRKFRKEQ) show a composition bias toward basic residues. The interval 1–20 (MLQPSRRKFRKEQKGRNTGV) is disordered.

The protein belongs to the universal ribosomal protein uL16 family. Part of the 50S ribosomal subunit.

Functionally, binds 23S rRNA and is also seen to make contacts with the A and possibly P site tRNAs. The sequence is that of Large ribosomal subunit protein uL16 from Leptothrix cholodnii (strain ATCC 51168 / LMG 8142 / SP-6) (Leptothrix discophora (strain SP-6)).